The primary structure comprises 225 residues: Ribonuclease 3 (225 aa).

Residues 5–127 (VTELYKTIDY…IIGAVFLDSD (123 aa)) enclose the RNase III domain. E40 contacts Mg(2+). D44 is an active-site residue. Mg(2+) is bound by residues D113 and E116. Residue E116 is part of the active site. In terms of domain architecture, DRBM spans 154-223 (DPKTLLQEHL…AEKALKILKN (70 aa)).

It belongs to the ribonuclease III family. As to quaternary structure, homodimer. Mg(2+) serves as cofactor.

Its subcellular location is the cytoplasm. It carries out the reaction Endonucleolytic cleavage to 5'-phosphomonoester.. Functionally, digests double-stranded RNA. Involved in the processing of primary rRNA transcript to yield the immediate precursors to the large and small rRNAs (23S and 16S). Processes some mRNAs, and tRNAs when they are encoded in the rRNA operon. Processes pre-crRNA and tracrRNA of type II CRISPR loci if present in the organism. The protein is Ribonuclease 3 of Pseudoalteromonas translucida (strain TAC 125).